The following is a 227-amino-acid chain: Peroxisomal membrane protein 11B (227 aa).

At 1 to 85 (MSLDTVDKLV…RNPGATPMIR (85 aa)) the chain is on the cytoplasmic side. A helical transmembrane segment spans residues 86-106 (FLAVLANSGEMVYFFFDHFLW). Residues 107–201 (LSRIGSIDAK…IALAEIHPNP (95 aa)) lie on the Lumenal side of the membrane. The chain crosses the membrane as a helical span at residues 202-222 (FCNHTITLGISGLVSAWAGWY). Residues 223 to 227 (RNWPS) are Cytoplasmic-facing.

It belongs to the peroxin-11 family. Homooligomer. Interacts with ARC5 and FIS1B on peroxisomes. Expressed in roots, leaves and developing siliques.

Its subcellular location is the peroxisome membrane. In terms of biological role, involved in peroxisomal proliferation. Promotes peroxisomal duplication, aggregation or elongation without fission. The chain is Peroxisomal membrane protein 11B (PEX11B) from Arabidopsis thaliana (Mouse-ear cress).